A 488-amino-acid polypeptide reads, in one-letter code: Malonate-semialdehyde dehydrogenase (488 aa).

NAD(+)-binding residues include Ala-150, Phe-152, Lys-176, Glu-179, Arg-180, Ser-229, and Thr-251. The active-site Nucleophile is Cys-284. An NAD(+)-binding site is contributed by Glu-382.

The protein belongs to the aldehyde dehydrogenase family. IolA subfamily. Homotetramer.

The catalysed reaction is 3-oxopropanoate + NAD(+) + CoA + H2O = hydrogencarbonate + acetyl-CoA + NADH + H(+). It carries out the reaction 2-methyl-3-oxopropanoate + NAD(+) + CoA + H2O = propanoyl-CoA + hydrogencarbonate + NADH + H(+). It participates in polyol metabolism; myo-inositol degradation into acetyl-CoA; acetyl-CoA from myo-inositol: step 7/7. Catalyzes the oxidation of malonate semialdehyde (MSA) and methylmalonate semialdehyde (MMSA) into acetyl-CoA and propanoyl-CoA, respectively. Is involved in a myo-inositol catabolic pathway. Bicarbonate, and not CO2, is the end-product of the enzymatic reaction. This Listeria innocua serovar 6a (strain ATCC BAA-680 / CLIP 11262) protein is Malonate-semialdehyde dehydrogenase.